A 313-amino-acid chain; its full sequence is uncharacterized protein (313 aa).

Helical transmembrane passes span 31–53 (AWGIGVIFPLYSLHALVLGGWLF), 62–84 (LFLFGCVFGMYEAYITKVLWNPY), 104–126 (VFFWHPIFAFILPLLIAEYIYTS), 147–161 (FALLLAALAGLNQSV), 166–185 (SMFWVALLSFFTILTPSFLL), 198–220 (RVLKLLTFALIILYLFWTFALRF), 225–244 (SFSGQLVVWLFYLLLFYLII), 264–282 (FFAACFLVYLTAFLITSSF), and 286–308 (PAAMLFLLAGTAYGTIVFASILI).

Its subcellular location is the cell membrane. This is an uncharacterized protein from Archaeoglobus fulgidus (strain ATCC 49558 / DSM 4304 / JCM 9628 / NBRC 100126 / VC-16).